Here is a 95-residue protein sequence, read N- to C-terminus: Large ribosomal subunit protein uL23 (95 aa).

The protein belongs to the universal ribosomal protein uL23 family. Part of the 50S ribosomal subunit. Contacts protein L29, and trigger factor when it is bound to the ribosome.

Functionally, one of the early assembly proteins it binds 23S rRNA. One of the proteins that surrounds the polypeptide exit tunnel on the outside of the ribosome. Forms the main docking site for trigger factor binding to the ribosome. The polypeptide is Large ribosomal subunit protein uL23 (Rubrobacter xylanophilus (strain DSM 9941 / JCM 11954 / NBRC 16129 / PRD-1)).